The following is a 377-amino-acid chain: Actin-related protein 2/3 complex subunit 1 (377 aa).

WD repeat units lie at residues 9–48 (ILPKPSYEHAFNSQRTEFVTTTATNQVELYEQDGNGWKHA), 53–92 (DHDKIVTCVDWAPKSNRIVTCSQDRNAYVYEKRPDGTWKQ), 98–139 (RLNR…WVSK), 144–183 (PLRSTILSLDWHPNNVLLAAGCADRKAYVLSAYVRDVDAK), and 203–242 (PSGGWVHAVGFSPSGNALAYAGHDSSVTIAYPSAPEQPPR). Residues 293–313 (GTSKTSFTHTGNTGEGREEEG) are disordered. One copy of the WD 6 repeat lies at 342–376 (VHQNMIATLRPYAGTPGNITAFTSSGTDGRVVLWT).

Belongs to the WD repeat ARPC1 family. Component of the Arp2/3 complex composed of arp2, act2, arc1/p41-ARC, arc2/p34-ARC, arc3/p21-ARC, arc4/p20-ARC and arc5/p16-ARC.

The protein localises to the cytoplasm. The protein resides in the cytoskeleton. Its subcellular location is the actin patch. In terms of biological role, functions as a component of the Arp2/3 complex which is involved in regulation of actin polymerization and together with an activating nucleation-promoting factor (NPF) mediates the formation of branched actin networks. The protein is Actin-related protein 2/3 complex subunit 1 (arc1) of Schizosaccharomyces pombe (strain 972 / ATCC 24843) (Fission yeast).